A 368-amino-acid polypeptide reads, in one-letter code: Ferredoxin--NADP reductase (368 aa).

7 residues coordinate FAD: D56, Q64, Y69, V109, F144, D310, and T351.

Belongs to the ferredoxin--NADP reductase type 2 family. As to quaternary structure, homodimer. FAD is required as a cofactor.

It carries out the reaction 2 reduced [2Fe-2S]-[ferredoxin] + NADP(+) + H(+) = 2 oxidized [2Fe-2S]-[ferredoxin] + NADPH. The polypeptide is Ferredoxin--NADP reductase (Leptothrix cholodnii (strain ATCC 51168 / LMG 8142 / SP-6) (Leptothrix discophora (strain SP-6))).